Here is a 58-residue protein sequence, read N- to C-terminus: Large ribosomal subunit protein bL32 (58 aa).

The protein belongs to the bacterial ribosomal protein bL32 family.

In Staphylococcus aureus (strain NCTC 8325 / PS 47), this protein is Large ribosomal subunit protein bL32.